The sequence spans 200 residues: Holliday junction branch migration complex subunit RuvA (200 aa).

The interval 1 to 64 is domain I; that stretch reads MYAYFRGELI…EDLMQLYGFI (64 aa). The interval 65-143 is domain II; sequence EEEERQLFLL…KLQQTRPGKT (79 aa). Residues 144-154 are flexible linker; it reads AGAGSVASLSE. Residues 154 to 200 are domain III; the sequence is EDALQALMTLGFSRASAQQAVTRALLSAENPGVEDIVREALQNIRNH.

It belongs to the RuvA family. Homotetramer. Forms an RuvA(8)-RuvB(12)-Holliday junction (HJ) complex. HJ DNA is sandwiched between 2 RuvA tetramers; dsDNA enters through RuvA and exits via RuvB. An RuvB hexamer assembles on each DNA strand where it exits the tetramer. Each RuvB hexamer is contacted by two RuvA subunits (via domain III) on 2 adjacent RuvB subunits; this complex drives branch migration. In the full resolvosome a probable DNA-RuvA(4)-RuvB(12)-RuvC(2) complex forms which resolves the HJ.

The protein localises to the cytoplasm. In terms of biological role, the RuvA-RuvB-RuvC complex processes Holliday junction (HJ) DNA during genetic recombination and DNA repair, while the RuvA-RuvB complex plays an important role in the rescue of blocked DNA replication forks via replication fork reversal (RFR). RuvA specifically binds to HJ cruciform DNA, conferring on it an open structure. The RuvB hexamer acts as an ATP-dependent pump, pulling dsDNA into and through the RuvAB complex. HJ branch migration allows RuvC to scan DNA until it finds its consensus sequence, where it cleaves and resolves the cruciform DNA. This is Holliday junction branch migration complex subunit RuvA from Prosthecochloris aestuarii (strain DSM 271 / SK 413).